Consider the following 403-residue polypeptide: Phosphopentomutase (403 aa).

Mn(2+) contacts are provided by aspartate 13, aspartate 298, histidine 303, aspartate 339, histidine 340, and histidine 351.

It belongs to the phosphopentomutase family. Mn(2+) is required as a cofactor.

It is found in the cytoplasm. It carries out the reaction 2-deoxy-alpha-D-ribose 1-phosphate = 2-deoxy-D-ribose 5-phosphate. The enzyme catalyses alpha-D-ribose 1-phosphate = D-ribose 5-phosphate. It participates in carbohydrate degradation; 2-deoxy-D-ribose 1-phosphate degradation; D-glyceraldehyde 3-phosphate and acetaldehyde from 2-deoxy-alpha-D-ribose 1-phosphate: step 1/2. In terms of biological role, isomerase that catalyzes the conversion of deoxy-ribose 1-phosphate (dRib-1-P) and ribose 1-phosphate (Rib-1-P) to deoxy-ribose 5-phosphate (dRib-5-P) and ribose 5-phosphate (Rib-5-P), respectively. This is Phosphopentomutase from Streptococcus mutans serotype c (strain ATCC 700610 / UA159).